The chain runs to 499 residues: Tektin-like protein 1 (499 aa).

The residue at position 14 (serine 14) is a Phosphoserine. Residues 201 to 225 adopt a coiled-coil conformation; sequence WEKKELKSMKRKMEKDMEISEDLLK. Positions 265 to 286 are disordered; it reads VDITRPPTPRTQGLKTPPPDPI. Residues 308–328 adopt a coiled-coil conformation; that stretch reads KDILTEMAKNEVDIQNQQQEI. Tyrosine 372 carries the phosphotyrosine modification.

As to quaternary structure, microtubule inner protein component of sperm flagellar doublet microtubules.

Its subcellular location is the cytoplasm. It localises to the cytoskeleton. The protein localises to the flagellum axoneme. In terms of biological role, microtubule inner protein (MIP) part of the dynein-decorated doublet microtubules (DMTs) in sperm flagellar axoneme, which is required for motile flagellum beating. Forms an extensive interaction network cross-linking the lumen of axonemal doublet microtubules. The protein is Tektin-like protein 1 of Mus musculus (Mouse).